Reading from the N-terminus, the 215-residue chain is uncharacterized protein (215 aa).

6 consecutive transmembrane segments (helical) span residues 3-23 (LLAY…LRSI), 30-50 (ANLL…GLTW), 59-79 (LGLS…LRFW), 87-107 (WGTY…AICV), 122-142 (VSTC…SNIY), and 156-176 (VLFG…LIYV).

It belongs to the major facilitator superfamily. Allantoate permease family.

It localises to the membrane. This is an uncharacterized protein from Saccharomyces cerevisiae (strain ATCC 204508 / S288c) (Baker's yeast).